The primary structure comprises 461 residues: Cysteine--tRNA ligase (461 aa).

Residue Cys28 participates in Zn(2+) binding. Residues 30–40 (ITVYDLCHIGH) carry the 'HIGH' region motif. Cys209, His234, and Glu238 together coordinate Zn(2+). The 'KMSKS' region motif lies at 266 to 270 (KMSKS). ATP is bound at residue Lys269.

This sequence belongs to the class-I aminoacyl-tRNA synthetase family. In terms of assembly, monomer. Zn(2+) is required as a cofactor.

It localises to the cytoplasm. The enzyme catalyses tRNA(Cys) + L-cysteine + ATP = L-cysteinyl-tRNA(Cys) + AMP + diphosphate. This chain is Cysteine--tRNA ligase, found in Escherichia coli O157:H7.